The following is a 116-amino-acid chain: Large ribosomal subunit protein eL31 (116 aa).

The protein belongs to the eukaryotic ribosomal protein eL31 family.

In Chlamydomonas reinhardtii (Chlamydomonas smithii), this protein is Large ribosomal subunit protein eL31 (RPL31).